A 403-amino-acid chain; its full sequence is RUN domain-containing protein 3B (403 aa).

The disordered stretch occupies residues 1–20 (MASRSLGGLSGSRGGGKKSL). Omega-N-methylarginine is present on R13. Positions 53-185 (DDSSPEFNNF…IDFSFCLKGE (133 aa)) constitute an RUN domain. The segment at 207 to 232 (SDSISSDEEELRTFGSSDSEGSTPEN) is disordered. A phosphoserine mark is found at S211 and S212. Residues 220 to 231 (FGSSDSEGSTPE) are compositionally biased toward polar residues. Positions 296 to 321 (AHKLEKEQLEYIIVELQDQLKSYQSL) form a coiled coil.

The protein belongs to the RUNDC3 family. In terms of assembly, interacts with RAP2A.

This chain is RUN domain-containing protein 3B (Rundc3b), found in Rattus norvegicus (Rat).